Consider the following 221-residue polypeptide: Ribosomal RNA small subunit methyltransferase Nep1 (221 aa).

S-adenosyl-L-methionine is bound by residues Gly-174, Gly-179, and 196–201 (IGDETM).

The protein belongs to the class IV-like SAM-binding methyltransferase superfamily. RNA methyltransferase NEP1 family. In terms of assembly, homodimer.

It catalyses the reaction a pseudouridine in rRNA + S-adenosyl-L-methionine = an N(1)-methylpseudouridine in rRNA + S-adenosyl-L-homocysteine + H(+). Its function is as follows. Methyltransferase involved in ribosomal biogenesis. Specifically catalyzes the N1-methylation of the pseudouridine corresponding to position 914 in M.jannaschii 16S rRNA. The sequence is that of Ribosomal RNA small subunit methyltransferase Nep1 from Pyrobaculum islandicum (strain DSM 4184 / JCM 9189 / GEO3).